Here is a 571-residue protein sequence, read N- to C-terminus: Putative F-box protein At5g39460 (571 aa).

The F-box domain occupies 9–55 (ACLLLTLPEDVFAVISRFLSPSDICNLILCGKSLCALVDSEKTWLVQ).

The chain is Putative F-box protein At5g39460 from Arabidopsis thaliana (Mouse-ear cress).